Here is a 249-residue protein sequence, read N- to C-terminus: 2,3-bisphosphoglycerate-dependent phosphoglycerate mutase (249 aa).

Substrate contacts are provided by residues 7–14, 20–21, Arg-59, 86–89, Lys-97, 113–114, and 182–183; these read RHGESEWN, TG, ERHY, RR, and GN. Catalysis depends on His-8, which acts as the Tele-phosphohistidine intermediate. The active-site Proton donor/acceptor is the Glu-86.

Belongs to the phosphoglycerate mutase family. BPG-dependent PGAM subfamily.

The enzyme catalyses (2R)-2-phosphoglycerate = (2R)-3-phosphoglycerate. Its pathway is carbohydrate degradation; glycolysis; pyruvate from D-glyceraldehyde 3-phosphate: step 3/5. Its function is as follows. Catalyzes the interconversion of 2-phosphoglycerate and 3-phosphoglycerate. This is 2,3-bisphosphoglycerate-dependent phosphoglycerate mutase from Lachnoclostridium phytofermentans (strain ATCC 700394 / DSM 18823 / ISDg) (Clostridium phytofermentans).